A 449-amino-acid chain; its full sequence is tRNA modification GTPase MnmE (449 aa).

(6S)-5-formyl-5,6,7,8-tetrahydrofolate is bound by residues R24, E81, and K121. The TrmE-type G domain maps to 218–375 (GLVVAITGPP…LIAALGKFAA (158 aa)). GTP contacts are provided by residues 228 to 233 (NVGKST), 247 to 253 (SPHAGTT), and 272 to 275 (DTAG). 2 residues coordinate Mg(2+): S232 and T253. A (6S)-5-formyl-5,6,7,8-tetrahydrofolate-binding site is contributed by K449.

This sequence belongs to the TRAFAC class TrmE-Era-EngA-EngB-Septin-like GTPase superfamily. TrmE GTPase family. In terms of assembly, homodimer. Heterotetramer of two MnmE and two MnmG subunits. The cofactor is K(+).

The protein localises to the cytoplasm. Functionally, exhibits a very high intrinsic GTPase hydrolysis rate. Involved in the addition of a carboxymethylaminomethyl (cmnm) group at the wobble position (U34) of certain tRNAs, forming tRNA-cmnm(5)s(2)U34. In Rhodopseudomonas palustris (strain BisB18), this protein is tRNA modification GTPase MnmE.